The sequence spans 237 residues: ATP-dependent dethiobiotin synthetase BioD (237 aa).

An ATP-binding site is contributed by 21–26 (GVGKTV). T25 contributes to the Mg(2+) binding site. The active site involves K48. A substrate-binding site is contributed by T52. Residues D56, 117 to 120 (EALG), 177 to 178 (SC), and 209 to 211 (PYL) contribute to the ATP site. 2 residues coordinate Mg(2+): D56 and E117.

It belongs to the dethiobiotin synthetase family. Homodimer. Mg(2+) is required as a cofactor.

Its subcellular location is the cytoplasm. It carries out the reaction (7R,8S)-7,8-diammoniononanoate + CO2 + ATP = (4R,5S)-dethiobiotin + ADP + phosphate + 3 H(+). It catalyses the reaction (7R,8S)-8-amino-7-(carboxyamino)nonanoate + ATP = (4R,5S)-dethiobiotin + ADP + phosphate + H(+). It participates in cofactor biosynthesis; biotin biosynthesis; biotin from 7,8-diaminononanoate: step 1/2. In terms of biological role, catalyzes a mechanistically unusual reaction, the ATP-dependent insertion of CO2 between the N7 and N8 nitrogen atoms of 7,8-diaminopelargonic acid (DAPA, also called 7,8-diammoniononanoate) to form a ureido ring. This cyanobacterium does not encode bioA (which catalyzes the formation of the precursor for this reaction in the cannonical pathway), instead it encodes bioU, which replaces bioA and also performs the first half of the cannonical BioD reaction. Thus in this bacteria BioD has a different substrate. In Synechocystis replacement of bioU by bioA from E.coli leads to biotin synthesis, showing BioD can use the 'cannonical' 7,8-diammoniononanoate as a substrate. In Synechocystis sp. (strain ATCC 27184 / PCC 6803 / Kazusa), this protein is ATP-dependent dethiobiotin synthetase BioD.